A 379-amino-acid polypeptide reads, in one-letter code: Deoxyhypusine synthase (379 aa).

Residues 104-108 (SNLVS), 130-132 (TAG), glutamate 136, and aspartate 237 contribute to the NAD(+) site. 135-136 (EE) is a spermidine binding site. A spermidine-binding site is contributed by aspartate 242. Glycine 293 is an NAD(+) binding site. Residue histidine 298 coordinates spermidine. An NAD(+)-binding site is contributed by 318-319 (TA). Spermidine contacts are provided by residues 324 to 326 (GSD) and 333 to 339 (EAVSWGK). Lysine 339 acts as the Nucleophile in catalysis. Position 352-353 (352-353 (DA)) interacts with NAD(+).

Belongs to the deoxyhypusine synthase family. Homotetramer. Requires NAD(+) as cofactor.

It carries out the reaction [eIF5A protein]-L-lysine + spermidine = [eIF5A protein]-deoxyhypusine + propane-1,3-diamine. It participates in protein modification; eIF5A hypusination. In terms of biological role, catalyzes the NAD-dependent oxidative cleavage of spermidine and the subsequent transfer of the butylamine moiety of spermidine to the epsilon-amino group of a specific lysine residue of the eIF-5A precursor protein to form the intermediate deoxyhypusine residue. Also able to produce homospermidine from putrescine. This is Deoxyhypusine synthase (DHS1) from Nicotiana tabacum (Common tobacco).